The following is a 186-amino-acid chain: Elongation factor P (186 aa).

It belongs to the elongation factor P family.

It localises to the cytoplasm. The protein operates within protein biosynthesis; polypeptide chain elongation. Its function is as follows. Involved in peptide bond synthesis. Stimulates efficient translation and peptide-bond synthesis on native or reconstituted 70S ribosomes in vitro. Probably functions indirectly by altering the affinity of the ribosome for aminoacyl-tRNA, thus increasing their reactivity as acceptors for peptidyl transferase. The protein is Elongation factor P of Cupriavidus metallidurans (strain ATCC 43123 / DSM 2839 / NBRC 102507 / CH34) (Ralstonia metallidurans).